Consider the following 333-residue polypeptide: 4-hydroxyproline epimerase (333 aa).

Cysteine 90 acts as the Proton acceptor in catalysis. Substrate is bound by residues 91–92 and aspartate 249; that span reads GH. The Proton donor role is filled by cysteine 253. 254–255 contacts substrate; the sequence is GT.

The protein belongs to the proline racemase family. Homodimer.

The enzyme catalyses trans-4-hydroxy-L-proline = cis-4-hydroxy-D-proline. Its activity is regulated as follows. Inhibited by iodoacetate, iodoacetamide and by high amounts (10 mM) of pyrrole-2-carboxylic acid (PYC). Not inhibited by PYC at 1 mM. Functionally, allows intracellular utilization of 4-hydroxyproline, one of the major constituents of host collagen, by converting 4-hydroxy-L-proline to 4-hydroxy-D-proline, which can be further metabolized by intracellular 4-hydroxy-D-proline oxidases. Strong B-cell mitogen. Plays an important role in the regulation of intra- and extracellular amino acid pools, allowing the bacterium to profit from host precursors and enzymatic pathways. This is 4-hydroxyproline epimerase from Brucella melitensis biotype 1 (strain ATCC 23456 / CCUG 17765 / NCTC 10094 / 16M).